A 190-amino-acid chain; its full sequence is MPPRPRFDRRSPVRELPNINERIKYPQLRVVDSDGKQLGVIDRLEALEIASQRELDLVLVSEKANPPVCRVMDYGKYKFEQEKKAKEARKKSHQTEVKEVKMRYKIDKHDYDVRIGQATKFLKSGDKVKCTVFFRGREIQHSNLAETLLLKMANDLEEQSEIQQKPKREGRNMIMFLSPRKTPLIKKDEG.

This sequence belongs to the IF-3 family. As to quaternary structure, monomer.

It is found in the cytoplasm. Functionally, IF-3 binds to the 30S ribosomal subunit and shifts the equilibrium between 70S ribosomes and their 50S and 30S subunits in favor of the free subunits, thus enhancing the availability of 30S subunits on which protein synthesis initiation begins. The chain is Translation initiation factor IF-3 from Prochlorococcus marinus (strain MIT 9312).